Here is a 151-residue protein sequence, read N- to C-terminus: Deoxyuridine 5'-triphosphate nucleotidohydrolase (151 aa).

Substrate contacts are provided by residues 70-72, asparagine 83, and 87-89; these read RSG and TID.

Belongs to the dUTPase family. Mg(2+) is required as a cofactor.

It carries out the reaction dUTP + H2O = dUMP + diphosphate + H(+). It participates in pyrimidine metabolism; dUMP biosynthesis; dUMP from dCTP (dUTP route): step 2/2. In terms of biological role, this enzyme is involved in nucleotide metabolism: it produces dUMP, the immediate precursor of thymidine nucleotides and it decreases the intracellular concentration of dUTP so that uracil cannot be incorporated into DNA. The chain is Deoxyuridine 5'-triphosphate nucleotidohydrolase from Ruegeria pomeroyi (strain ATCC 700808 / DSM 15171 / DSS-3) (Silicibacter pomeroyi).